Reading from the N-terminus, the 289-residue chain is Bis(5'-nucleosyl)-tetraphosphatase, symmetrical (289 aa).

Belongs to the Ap4A hydrolase family.

The catalysed reaction is P(1),P(4)-bis(5'-adenosyl) tetraphosphate + H2O = 2 ADP + 2 H(+). Functionally, hydrolyzes diadenosine 5',5'''-P1,P4-tetraphosphate to yield ADP. This chain is Bis(5'-nucleosyl)-tetraphosphatase, symmetrical, found in Pseudomonas fluorescens (strain ATCC BAA-477 / NRRL B-23932 / Pf-5).